A 332-amino-acid chain; its full sequence is Solute carrier family 25 member 16 (332 aa).

3 Solcar repeats span residues 34–120 (FYWL…YKTL), 128–216 (SGHV…LKSV), and 238–328 (LKTH…MKQF). Transmembrane regions (helical) follow at residues 37–57 (LRSFLAGGIAGCCAKTTVAPL), 88–108 (GFLGLYKGNGAMMIRIFPYGA), 134–154 (LMAGSMAGMTAVICTYPLDMV), 191–211 (GLMPTILGMAPYAGVSFFTFG), 244–264 (LLCGGVAGAIAQTISYPFDVT), and 299–319 (GLYRGLSLNYIRCIPSQAVAF).

The protein belongs to the mitochondrial carrier (TC 2.A.29) family.

The protein resides in the mitochondrion inner membrane. Functionally, may be involved in the transport of coenzyme A in the mitochondrial matrix. Very little is known about the physiological function of this carrier. This is Solute carrier family 25 member 16 from Homo sapiens (Human).